Consider the following 364-residue polypeptide: MSGNSIGQNFVVTTFGESHGVALGCIIDGCPPGLELTEADMQHDLDRRRPGTSRYTTARREPDEVRILSGVFEGKTTGTSIGLLIENTDQRSQDYSNIKDLFRPGHADYTYQQKYGMRDYRGGGRSSARETAMRVAAGAVAKKYLKQVHGIEIYGFMSQLGPICAQTIDLDQIEQNAFFFPDASKLEALDEYMRELKKSGDSIGAKISVIATGVPVGLGEPVFDRLDADIAHALMGINAVKGVEIGDGFGVVTQKGSEGRDLMSPQGFESNHAGGVLGGISSGQPIIAHIALKPTSSISVPGQSMTAQGEMAEVVTKGRHDPCVGIRAVPIAEAMLAIVLMDHLLRHRAQNQDVRSHTPVLGMR.

The interval 41 to 60 (MQHDLDRRRPGTSRYTTARR) is disordered. Residues Arg48 and Arg54 each coordinate NADP(+). FMN is bound by residues 125-127 (RSS), 238-239 (NA), Gly278, 293-297 (KPTSS), and Arg319.

Belongs to the chorismate synthase family. As to quaternary structure, homotetramer. FMNH2 serves as cofactor.

It carries out the reaction 5-O-(1-carboxyvinyl)-3-phosphoshikimate = chorismate + phosphate. It participates in metabolic intermediate biosynthesis; chorismate biosynthesis; chorismate from D-erythrose 4-phosphate and phosphoenolpyruvate: step 7/7. In terms of biological role, catalyzes the anti-1,4-elimination of the C-3 phosphate and the C-6 proR hydrogen from 5-enolpyruvylshikimate-3-phosphate (EPSP) to yield chorismate, which is the branch point compound that serves as the starting substrate for the three terminal pathways of aromatic amino acid biosynthesis. This reaction introduces a second double bond into the aromatic ring system. The polypeptide is Chorismate synthase (Shewanella baltica (strain OS185)).